The chain runs to 102 residues: Crustacean hyperglycemic hormones 3 (102 aa).

A signal peptide spans 1–22 (MIALRLIAVTLVVAMAASTTWA). Cystine bridges form between Cys35–Cys71, Cys51–Cys67, and Cys54–Cys80. Val100 is subject to Valine amide.

Belongs to the arthropod CHH/MIH/GIH/VIH hormone family.

It is found in the secreted. In terms of biological role, hormone found in the sinus gland of isopods and decapods which controls the blood sugar level. Has a secretagogue action over the amylase released from the midgut gland. May act as a stress hormone and may be involved in the control of molting and reproduction. The sequence is that of Crustacean hyperglycemic hormones 3 (CHH3) from Penaeus monodon (Giant tiger prawn).